We begin with the raw amino-acid sequence, 195 residues long: Transcription repressor OFP17 (195 aa).

The OVATE domain maps to 130 to 190 (EDNAVEDACR…SRFYGELCRD (61 aa)).

It is found in the nucleus. Transcriptional repressor that may regulate multiple aspects of plant growth and development through the regulation of BEL1-LIKE (BLH) and KNOX TALE (KNAT) homeodomain transcription factors. In Arabidopsis thaliana (Mouse-ear cress), this protein is Transcription repressor OFP17 (OFP17).